The sequence spans 45 residues: Mu-conotoxin-like Cal 12.1.2e (45 aa).

4 disulfides stabilise this stretch: Cys-3–Cys-16, Cys-11–Cys-28, Cys-18–Cys-33, and Cys-27–Cys-39. Trp-17 carries the post-translational modification 6'-bromotryptophan. Pro-23 carries the post-translational modification 4-hydroxyproline. Trp-38 is modified (6'-bromotryptophan). Pro-40 carries the 4-hydroxyproline modification.

As to expression, expressed by the venom duct.

Its subcellular location is the secreted. Functionally, mu-conotoxins block voltage-gated sodium channels. This toxin reversibly blocks voltage-gated sodium channel in cephalopods, with no alteration in the voltage dependence of sodium conductance or on the kinetics of inactivation. The protein is Mu-conotoxin-like Cal 12.1.2e of Californiconus californicus (California cone).